We begin with the raw amino-acid sequence, 490 residues long: Subtilisin-like protease 8 (490 aa).

The first 26 residues, 1–26 (MKGLLSLSVLPVLAYASPMIVDSIHQ), serve as a signal peptide directing secretion. Positions 27–134 (NAAPILSSTN…YIERDSEVHT (108 aa)) are excised as a propeptide. The Inhibitor I9 domain maps to 43-134 (SYIVVFKKGV…YIERDSEVHT (92 aa)). Positions 144–450 (PWGLARISHR…GGSDDYKKII (307 aa)) constitute a Peptidase S8 domain. Residues aspartate 180 and histidine 212 each act as charge relay system in the active site. An N-linked (GlcNAc...) asparagine glycan is attached at asparagine 282. Residue serine 378 is the Charge relay system of the active site. N-linked (GlcNAc...) asparagine glycosylation is present at asparagine 456.

Belongs to the peptidase S8 family.

Its subcellular location is the secreted. Functionally, secreted subtilisin-like serine protease with keratinolytic activity that contributes to pathogenicity. The chain is Subtilisin-like protease 8 (SUB8) from Trichophyton verrucosum (strain HKI 0517).